A 1010-amino-acid polypeptide reads, in one-letter code: Lysosomal alpha-mannosidase (1010 aa).

Positions 1-22 (MVIKKLFILIFCLFLIINEING) are cleaved as a signal peptide. Residues 23–40 (KKTKINDIKKSKPKLSST) constitute a propeptide, pro I. The Zn(2+) site is built by His51 and Asp53. Asn68 carries an N-linked (GlcNAc...) asparagine glycan. Residues Asp173 and His420 each contribute to the Zn(2+) site. Catalysis depends on Asp173, which acts as the Nucleophile. N-linked (GlcNAc...) asparagine glycosylation is found at Asn480, Asn520, Asn528, Asn539, Asn623, Asn760, Asn784, Asn828, Asn954, and Asn963. The propeptide at 508–595 (RNEPVRIPIP…GGGKINEKVS (88 aa)) is pro II.

The protein belongs to the glycosyl hydrolase 38 family. Tetramer of equimolar amounts of 60 and 58 kDa subunits. Requires Zn(2+) as cofactor. Post-translationally, first cleaved into the mature 58 kDa subunit and an intermediate 82 kDa subunit. The latter is then cleaved to its mature 60 kDa subunit form. These events occur in multiple intracellular compartments. The 60 kDa subunit may form one or more intramolecular disulfide bonds.

The protein resides in the lysosome. The catalysed reaction is Hydrolysis of terminal, non-reducing alpha-D-mannose residues in alpha-D-mannosides.. The sequence is that of Lysosomal alpha-mannosidase (manA) from Dictyostelium discoideum (Social amoeba).